A 480-amino-acid chain; its full sequence is Endothelial transcription factor GATA-2 (480 aa).

The residue at position 73 (Ser73) is a Phosphoserine. An Asymmetric dimethylarginine modification is found at Arg86. A disordered region spans residues 166-208; that stretch reads SGSHLFGFPPTPPKEVSPDPSTTGAASPASSSAGGSVARGEDK. The span at 183–201 shows a compositional bias: low complexity; the sequence is PDPSTTGAASPASSSAGGS. Residue Ser192 is modified to Phosphoserine. 2 GATA-type zinc fingers span residues 295-319 and 349-373; these read CVNC…CNAC and CANC…CNAC. Residue Lys389 forms a Glycyl lysine isopeptide (Lys-Gly) (interchain with G-Cter in SUMO2) linkage. The disordered stretch occupies residues 457–480; sequence TPIHPSSSLSFGHPHPSSMVTAMG.

As to quaternary structure, interacts with BRD3. Interacts with AR and CCAR1. Interacts with MDFIC.

It localises to the nucleus. Its function is as follows. Transcriptional activator which regulates endothelin-1 gene expression in endothelial cells. Binds to the consensus sequence 5'-AGATAG-3'. This Mus musculus (Mouse) protein is Endothelial transcription factor GATA-2 (Gata2).